The chain runs to 554 residues: 3-(3-hydroxy-phenyl)propionate/3-hydroxycinnamic acid hydroxylase (554 aa).

Residues 17–46 and 285–295 contribute to the FAD site; these read QVAIAGAGPVGLMMANYLGQMGIDVLVVEK and FRIDRVLLAGD.

Belongs to the PheA/TfdB FAD monooxygenase family. The cofactor is FAD.

The enzyme catalyses 3-(3-hydroxyphenyl)propanoate + NADH + O2 + H(+) = 3-(2,3-dihydroxyphenyl)propanoate + NAD(+) + H2O. The catalysed reaction is (2E)-3-(3-hydroxyphenyl)prop-2-enoate + NADH + O2 + H(+) = (2E)-3-(2,3-dihydroxyphenyl)prop-2-enoate + NAD(+) + H2O. It functions in the pathway aromatic compound metabolism; 3-phenylpropanoate degradation. In terms of biological role, catalyzes the insertion of one atom of molecular oxygen into position 2 of the phenyl ring of 3-(3-hydroxyphenyl)propionate (3-HPP) and hydroxycinnamic acid (3HCI). The protein is 3-(3-hydroxy-phenyl)propionate/3-hydroxycinnamic acid hydroxylase of Escherichia coli O8 (strain IAI1).